The sequence spans 59 residues: Potassium channel toxin alpha-KTx 1.14 (59 aa).

The N-terminal stretch at 1–22 (MKKISFLLLLAIVICSIGWTDG) is a signal peptide. Glutamine 23 is modified (pyrrolidone carboxylic acid). Cystine bridges form between cysteine 29-cysteine 50, cysteine 35-cysteine 55, and cysteine 39-cysteine 57.

This sequence belongs to the short scorpion toxin superfamily. Potassium channel inhibitor family. Alpha-KTx 01 subfamily. As to expression, expressed by the venom gland.

It localises to the secreted. Functionally, potent blocker of both large-conductance calcium-activated potassium channels (KCa1.1/KCNMA1) and voltage-gated potassium channels (Kv1.3/KCNA3 and ERG1/Kv11.1/KCNH2). This Olivierus martensii (Manchurian scorpion) protein is Potassium channel toxin alpha-KTx 1.14.